The following is a 527-amino-acid chain: Probable T-complex protein 1 subunit beta (527 aa).

Belongs to the TCP-1 chaperonin family. Heterooligomeric complex of about 850 to 900 kDa that forms two stacked rings, 12 to 16 nm in diameter.

The protein localises to the cytoplasm. In terms of biological role, molecular chaperone; assists the folding of proteins upon ATP hydrolysis. Known to play a role, in vitro, in the folding of actin and tubulin. This Schizosaccharomyces pombe (strain 972 / ATCC 24843) (Fission yeast) protein is Probable T-complex protein 1 subunit beta (cct2).